The primary structure comprises 208 residues: Small ribosomal subunit protein uS4 (208 aa).

The region spanning 98 to 161 is the S4 RNA-binding domain; sequence RRLDNVIYRL…KESPRIKELL (64 aa).

Belongs to the universal ribosomal protein uS4 family. Part of the 30S ribosomal subunit. Contacts protein S5. The interaction surface between S4 and S5 is involved in control of translational fidelity.

Its function is as follows. One of the primary rRNA binding proteins, it binds directly to 16S rRNA where it nucleates assembly of the body of the 30S subunit. In terms of biological role, with S5 and S12 plays an important role in translational accuracy. This Pelotomaculum thermopropionicum (strain DSM 13744 / JCM 10971 / SI) protein is Small ribosomal subunit protein uS4.